Consider the following 86-residue polypeptide: EMBRYO SURROUNDING FACTOR 1-like protein 2 (86 aa).

The first 21 residues, methionine 1 to tyrosine 21, serve as a signal peptide directing secretion. Cystine bridges form between cysteine 39-cysteine 54, cysteine 44-cysteine 82, cysteine 52-cysteine 78, and cysteine 55-cysteine 65.

The protein belongs to the MEG family.

The chain is EMBRYO SURROUNDING FACTOR 1-like protein 2 (ESFL2) from Arabidopsis thaliana (Mouse-ear cress).